A 158-amino-acid polypeptide reads, in one-letter code: Lipoprotein signal peptidase (158 aa).

3 helical membrane-spanning segments follow: residues Lys4–Thr24, Lys63–Ile83, and Tyr88–Ile108. Catalysis depends on residues Asp118 and Asp136. The helical transmembrane segment at Ile131–Leu151 threads the bilayer.

It belongs to the peptidase A8 family.

It localises to the cell membrane. The enzyme catalyses Release of signal peptides from bacterial membrane prolipoproteins. Hydrolyzes -Xaa-Yaa-Zaa-|-(S,diacylglyceryl)Cys-, in which Xaa is hydrophobic (preferably Leu), and Yaa (Ala or Ser) and Zaa (Gly or Ala) have small, neutral side chains.. The protein operates within protein modification; lipoprotein biosynthesis (signal peptide cleavage). In terms of biological role, this protein specifically catalyzes the removal of signal peptides from prolipoproteins. This Staphylococcus haemolyticus (strain JCSC1435) protein is Lipoprotein signal peptidase.